A 270-amino-acid chain; its full sequence is Transcription factor PU.1 (270 aa).

The disordered stretch occupies residues 124–162; that stretch reads LSPAQPSSDEEEGERQSPPLEVSDGEADGLEPGPGLLHG. A phosphoserine mark is found at S140 and S146. The segment covering 153-162 has biased composition (low complexity); it reads LEPGPGLLHG. The segment at residues 170 to 253 is a DNA-binding region (ETS); that stretch reads IRLYQFLLDL…VKKKLTYQFS (84 aa). DNA contacts are provided by K217, R230, R233, and K243.

Belongs to the ETS family. In terms of assembly, binds DNA as a monomer. Can form homomers. Directly interacts with CEBPD/NF-IL6-beta; this interaction does not affect DNA-binding properties of each partner. Interacts with NONO/p54(nrb). Interacts with RUNX1/AML1. Interacts with GFI1; the interaction represses SPI1 transcriptional activity, hence blocks SPI1-induced macrophage differentiation of myeloid progenitor cells. Interacts with CEBPE. Interacts with IRF4/Pip and IRF8. Interacts with JUN. Interacts with RB1. Interacts with TBP.

The protein localises to the nucleus. With respect to regulation, transcriptional activity at macrophage-specific genes is inhibited by interaction with GFI1, which results in the inhibition of SPI1-induced macrophage differentiation of myeloid progenitor cells, but not that of the granulocyte lineage. In terms of biological role, pioneer transcription factor, which controls hematopoietic cell fate by decompacting stem cell heterochromatin and allowing other transcription factors to enter otherwise inaccessible genomic sites. Once in open chromatin, can directly control gene expression by binding genetic regulatory elements and can also more broadly influence transcription by recruiting transcription factors, such as interferon regulatory factors (IRFs), to otherwise inaccessible genomic regions. Transcriptionally activates genes important for myeloid and lymphoid lineages, such as CSF1R. Transcriptional activation from certain promoters, possibly containing low affinity binding sites, is achieved cooperatively with other transcription factors. FCER1A transactivation is achieved in cooperation with GATA1. May be particularly important for the pro- to pre-B cell transition. Binds (via the ETS domain) onto the purine-rich DNA core sequence 5'-GAGGAA-3', also known as the PU-box. In vitro can bind RNA and interfere with pre-mRNA splicing. This chain is Transcription factor PU.1 (SPI1), found in Sus scrofa (Pig).